We begin with the raw amino-acid sequence, 365 residues long: MFQTSRSQLLYLSALGVWGLWGYAYFNGMFTRLDTITRTLHFPDNRPLRDSYTGLGPLDKQLTLLSVFYDVLTNSLSSGPRLLFFDINYAVACTNLWTLIESRRRGVRSWFLKYPAWAMVLCNANGAAIVLPIYLYCVCRSKARLRDPVVPLHEAVALPIITVVMLLQPLLIFAPAWFGYSGSETHHALIALFQVAPVIVLGLYVGITSLLSYHFPATSLSSKEYKKWISASLILAGSVASAVHIYTLTGALFTRDSDVSLTRLFVPTGGFTDPIKTLVSNENLLAEYAALLENLHLFSQWDWIVVCLTSVVYAQLLLSRREGLKVNKPAVPYEAQEMIYLTIATVVLGPGGAGSFALAIREARI.

Transmembrane regions (helical) follow at residues 10–30 (LYLS…NGMF), 82–102 (LLFF…LIES), 116–136 (AWAM…IYLY), 158–178 (LPII…PAWF), 188–208 (ALIA…VGIT), 233–253 (LILA…GALF), 297–317 (LFSQ…AQLL), and 338–358 (MIYL…SFAL).

The protein belongs to the membrane-bound ascI terpene cyclase family.

It localises to the membrane. It functions in the pathway polyketide biosynthesis. In terms of biological role, part of the gene cluster that mediates the biosynthesis of depudecin, a highly oxidized eleven-carbon linear polyketide that acts as a histone deacetylase (HDAC) inhibitor and makes a small contribution to pathogenesis. The reducing polyketide synthase DEP5 is the central enzyme in depudecin biosynthesis by yielding the backbone polyketide chain. The monooxygenases DEP2 and DEP4, as well as the uncharacterized protein DEP1, then act as tailoring enzymes to modify the intermediate polyketide chain into depudecin. This chain is Terpene cyclase DEP1, found in Fusarium langsethiae.